Consider the following 291-residue polypeptide: MYEHINLITAIITPFNAENEIDYPALDRVIDHLLETGTQGLVIAGTTGESPTLSHEEKLALTQHIAAYVPVDTLLIANAGTNNTVESVRNARELSEIPNVDAILAVTPYYNKPNQRGMIAHFTAIADASNRPVMLYNIPGRSAVGLTVDSVVTLAQHPNINAIKETTSVAFIAAEIEQTQNDDFAVYTGEDAQTLAAFVHGGAGTISVASHLYGREMSALFTALAVGDWQEAGVLQRYLTPKMNALFAFPSPAPVKAKLHDLDMVENLTRQPILPLNVAEKKALDKLLEDM.

Thr-47 contributes to the pyruvate binding site. Tyr-136 acts as the Proton donor/acceptor in catalysis. Catalysis depends on Lys-164, which acts as the Schiff-base intermediate with substrate. Ile-206 provides a ligand contact to pyruvate.

This sequence belongs to the DapA family. Homotetramer; dimer of dimers.

The protein resides in the cytoplasm. The catalysed reaction is L-aspartate 4-semialdehyde + pyruvate = (2S,4S)-4-hydroxy-2,3,4,5-tetrahydrodipicolinate + H2O + H(+). It functions in the pathway amino-acid biosynthesis; L-lysine biosynthesis via DAP pathway; (S)-tetrahydrodipicolinate from L-aspartate: step 3/4. Functionally, catalyzes the condensation of (S)-aspartate-beta-semialdehyde [(S)-ASA] and pyruvate to 4-hydroxy-tetrahydrodipicolinate (HTPA). The protein is 4-hydroxy-tetrahydrodipicolinate synthase of Leuconostoc citreum (strain KM20).